We begin with the raw amino-acid sequence, 369 residues long: Glycolate oxidase 1 (369 aa).

The FMN hydroxy acid dehydrogenase domain maps to 1–360; it reads MGEITNVMEY…TRAHIYTDAD (360 aa). Tyr-25 lines the glyoxylate pocket. FMN contacts are provided by residues 78–80, Ser-107, 128–130, and Thr-156; these read PSA and QLY. Tyr-130 is a binding site for glyoxylate. Residue Arg-165 participates in glyoxylate binding. The FMN site is built by Lys-231 and Ser-253. Positions 255 and 258 each coordinate glyoxylate. His-255 functions as the Proton acceptor in the catalytic mechanism. FMN is bound by residues 286 to 290 and 309 to 310; these read DGGVR and GR. The Microbody targeting signal signature appears at 367–369; it reads PRL.

This sequence belongs to the FMN-dependent alpha-hydroxy acid dehydrogenase family. Homotetramer. Interacts with rice dwarf virus (RDV) P8. This interaction promotes viral P8 relocation to virus factories peripheral to peroxisomes. FMN is required as a cofactor.

Its subcellular location is the peroxisome. It catalyses the reaction glycolate + O2 = glyoxylate + H2O2. Its pathway is photosynthesis; photorespiration; glycine from 2-phosphoglycolate: step 2/3. Catalyzes the oxidation of glycolate to glyoxylate, with a reduction of O2 to H2O2. Is a key enzyme in photorespiration in plants. Can exert a strong regulation over photosynthesis, possibly through a feed-back inhibition on Rubisco activase. Does not seem to play a role in oxalate accumulation. The chain is Glycolate oxidase 1 (GLO1) from Oryza sativa subsp. indica (Rice).